The primary structure comprises 370 residues: Chorismate synthase (370 aa).

NADP(+) contacts are provided by Arg48 and Arg54. FMN-binding positions include 130–132 (RSS), 242–243 (NA), Gly287, 302–306 (KPTSS), and Arg328.

The protein belongs to the chorismate synthase family. As to quaternary structure, homotetramer. It depends on FMNH2 as a cofactor.

It catalyses the reaction 5-O-(1-carboxyvinyl)-3-phosphoshikimate = chorismate + phosphate. It functions in the pathway metabolic intermediate biosynthesis; chorismate biosynthesis; chorismate from D-erythrose 4-phosphate and phosphoenolpyruvate: step 7/7. Its function is as follows. Catalyzes the anti-1,4-elimination of the C-3 phosphate and the C-6 proR hydrogen from 5-enolpyruvylshikimate-3-phosphate (EPSP) to yield chorismate, which is the branch point compound that serves as the starting substrate for the three terminal pathways of aromatic amino acid biosynthesis. This reaction introduces a second double bond into the aromatic ring system. The sequence is that of Chorismate synthase from Xanthobacter autotrophicus (strain ATCC BAA-1158 / Py2).